Reading from the N-terminus, the 593-residue chain is MATAASSITLTVLMGVLLVGVVAVLARLEDWRSYTPLSDVGGGLGERTGYTHEEKPGGIIRWFTTVDHKDIGILYGVYGTIAFAWGGVSVLLMRTELATSSETLISPSLYNGLLTSHGITMLFLFGTPMIAAFGNYFIPLLIDADDMAFPRINAIAFWLLPPGAILIWSGFLIPGIATAQTSWTMYTPLSLQMSSPAVDMMMLGLHLTGVSATMGAINFIATIFTERGEDVGWPDLDIFSWTMLTQSGLILFAFPLFGSALIMLLLDRNFGTTFFTVAGGDPIFWQHLFWFFGHPEVYVLVLPPMGIVSLILPKFSGRKLFGFKFVVYSTLAIGVLSFGVWAHHMFTTGIDPRIRSSFMAVSLAISIPSAVKVFNWITTMWNGKLRLTAPMLFCIGFVQNFIIGGVTGVFLAVIPIDLILHDTYYVVGHFHFIVYGAIGFALFAASYYWFPMVTGRMYQKRLAHAHFWTALVGSNATFLAMLWLGYGGMPRRYATYIPQFATAHRLATVGAFLIGVSTLIWLFNMATSWREGPRVDSTDPWDLEETDQFTNDWAWFRAKEETTVLPDGGDEAQSEADAVTDGGQPAADSDTES.

A run of 2 helical transmembrane segments spans residues 5–25 (ASSITLTVLMGVLLVGVVAVL) and 71–91 (IGILYGVYGTIAFAWGGVSVL). Residue His117 coordinates Fe(II)-heme a. 6 helical membrane-spanning segments follow: residues 122 to 142 (LFLFGTPMIAAFGNYFIPLLI), 154 to 174 (AIAFWLLPPGAILIWSGFLIP), 204 to 224 (GLHLTGVSATMGAINFIATIF), 246 to 266 (QSGLILFAFPLFGSALIMLLL), 288 to 308 (LFWFFGHPEVYVLVLPPMGIV), and 320 to 340 (LFGFKFVVYSTLAIGVLSFGV). Cu cation is bound by residues His294 and Tyr298. A cross-link (1'-histidyl-3'-tyrosine (His-Tyr)) is located at residues 294-298 (HPEVY). Residues His343 and His344 each coordinate Cu cation. Helical transmembrane passes span 358 to 378 (FMAVSLAISIPSAVKVFNWIT), 401 to 421 (FIIGGVTGVFLAVIPIDLILH), 425 to 445 (YVVGHFHFIVYGAIGFALFAA), 467 to 487 (FWTALVGSNATFLAMLWLGYG), and 506 to 526 (LATVGAFLIGVSTLIWLFNMA). Residue His429 participates in heme a3 binding. A Fe(II)-heme a-binding site is contributed by His431. Residues 562 to 593 (TTVLPDGGDEAQSEADAVTDGGQPAADSDTES) form a disordered region.

This sequence belongs to the heme-copper respiratory oxidase family.

The protein localises to the cell membrane. It catalyses the reaction 4 Fe(II)-[cytochrome c] + O2 + 8 H(+)(in) = 4 Fe(III)-[cytochrome c] + 2 H2O + 4 H(+)(out). It functions in the pathway energy metabolism; oxidative phosphorylation. Functionally, cytochrome c oxidase is the component of the respiratory chain that catalyzes the reduction of oxygen to water. Subunits 1-3 form the functional core of the enzyme complex. CO I is the catalytic subunit of the enzyme. Electrons originating in cytochrome c are transferred via the copper A center of subunit 2 and heme A of subunit 1 to the bimetallic center formed by heme A3 and copper B. The chain is Cytochrome c oxidase polypeptide 1 (coxA2) from Halobacterium salinarum (strain ATCC 700922 / JCM 11081 / NRC-1) (Halobacterium halobium).